The chain runs to 306 residues: Methionyl-tRNA formyltransferase (306 aa).

A (6S)-5,6,7,8-tetrahydrofolate-binding site is contributed by 108-111 (SLLP).

It belongs to the Fmt family.

It carries out the reaction L-methionyl-tRNA(fMet) + (6R)-10-formyltetrahydrofolate = N-formyl-L-methionyl-tRNA(fMet) + (6S)-5,6,7,8-tetrahydrofolate + H(+). Its function is as follows. Attaches a formyl group to the free amino group of methionyl-tRNA(fMet). The formyl group appears to play a dual role in the initiator identity of N-formylmethionyl-tRNA by promoting its recognition by IF2 and preventing the misappropriation of this tRNA by the elongation apparatus. This is Methionyl-tRNA formyltransferase from Arthrobacter sp. (strain FB24).